The sequence spans 447 residues: Glycerol-3-phosphate acyltransferase ATS11, chloroplastic (447 aa).

Residues 1–21 are disordered; the sequence is MFILSSSSSLPSPLSLSSSRV. The N-terminal 48 residues, 1–48, are a transit peptide targeting the chloroplast; it reads MFILSSSSSLPSPLSLSSSRVSLPPPSSSSLNLLPLSPHFQPPNLACS. Positions 217–222 match the HXXXXD motif motif; that stretch reads HQTEAD.

This sequence belongs to the GPAT/DAPAT family.

It is found in the plastid. Its subcellular location is the chloroplast stroma. It catalyses the reaction a fatty acyl-[ACP] + sn-glycerol 3-phosphate = a 1-acyl-sn-glycero-3-phosphate + holo-[ACP]. The enzyme catalyses sn-glycerol 3-phosphate + an acyl-CoA = a 1-acyl-sn-glycero-3-phosphate + CoA. The protein operates within phospholipid metabolism; CDP-diacylglycerol biosynthesis; CDP-diacylglycerol from sn-glycerol 3-phosphate: step 1/3. Functionally, esterifies the acyl-group from acyl-acyl carrier proteins (acyl-ACPs) to the sn-1 position of glycerol-3-phosphate. The physiological acyl donors in chloroplasts are acyl-ACPs, but acyl-CoAs are used as artificial donor for in vitro reactions. The enzyme from chilling-resistant plants discriminates against non-fluid palmitic acid and selects oleic acid whereas the enzyme from sensitive plants accepts both fatty acids. Squash is chilling-sensitive. Preferably utilizes oleoyl groups (18:1-ACP) and has lower affinity to palmitoyl (16:0-ACP) and stearoyl groups (18:0-ACP). This is Glycerol-3-phosphate acyltransferase ATS11, chloroplastic from Cucurbita moschata (Winter crookneck squash).